The sequence spans 211 residues: Probable nicotinate-nucleotide adenylyltransferase (211 aa).

Belongs to the NadD family.

The catalysed reaction is nicotinate beta-D-ribonucleotide + ATP + H(+) = deamido-NAD(+) + diphosphate. It functions in the pathway cofactor biosynthesis; NAD(+) biosynthesis; deamido-NAD(+) from nicotinate D-ribonucleotide: step 1/1. Catalyzes the reversible adenylation of nicotinate mononucleotide (NaMN) to nicotinic acid adenine dinucleotide (NaAD). The chain is Probable nicotinate-nucleotide adenylyltransferase from Corynebacterium kroppenstedtii (strain DSM 44385 / JCM 11950 / CIP 105744 / CCUG 35717).